Reading from the N-terminus, the 139-residue chain is ATP synthase epsilon chain (139 aa).

Belongs to the ATPase epsilon chain family. F-type ATPases have 2 components, CF(1) - the catalytic core - and CF(0) - the membrane proton channel. CF(1) has five subunits: alpha(3), beta(3), gamma(1), delta(1), epsilon(1). CF(0) has three main subunits: a, b and c.

The protein localises to the cell inner membrane. Its function is as follows. Produces ATP from ADP in the presence of a proton gradient across the membrane. The protein is ATP synthase epsilon chain of Escherichia coli O139:H28 (strain E24377A / ETEC).